We begin with the raw amino-acid sequence, 271 residues long: NADPH-dependent 7-cyano-7-deazaguanine reductase (271 aa).

81–83 serves as a coordination point for substrate; the sequence is IES. An NADPH-binding site is contributed by 83–84; that stretch reads SK. Cys-177 serves as the catalytic Thioimide intermediate. Asp-184 acts as the Proton donor in catalysis. 216–217 lines the substrate pocket; sequence HE. 245-246 is an NADPH binding site; sequence RG.

It belongs to the GTP cyclohydrolase I family. QueF type 2 subfamily. In terms of assembly, homodimer.

It is found in the cytoplasm. It carries out the reaction 7-aminomethyl-7-carbaguanine + 2 NADP(+) = 7-cyano-7-deazaguanine + 2 NADPH + 3 H(+). It functions in the pathway tRNA modification; tRNA-queuosine biosynthesis. In terms of biological role, catalyzes the NADPH-dependent reduction of 7-cyano-7-deazaguanine (preQ0) to 7-aminomethyl-7-deazaguanine (preQ1). This is NADPH-dependent 7-cyano-7-deazaguanine reductase from Xanthomonas oryzae pv. oryzae (strain MAFF 311018).